The sequence spans 331 residues: Polyprenyl transferase mpaA' (331 aa).

Transmembrane regions (helical) follow at residues 27–47 (MPYYTMMAAVWATFIAGALKL), 56–76 (IEFILYKAGLCFVHCLLLCGA), 127–147 (LILDGRNIWTLMLPLTASIML), 159–179 (VFVYPQYILGLAIGYPAITGW), 190–210 (GDIIKHCIPICLLVFFWCVYF), 240–260 (LFLAFLSVLPLLTIPYIISTI), 264–284 (WLWVSWMATWTVSIVMQIAQF), and 295–315 (IHWDNFLLGLWTIVACMVEVG).

It belongs to the UbiA prenyltransferase family. It depends on Mg(2+) as a cofactor.

The protein resides in the golgi apparatus membrane. It carries out the reaction 5,7-dihydroxy-4-methylphthalide + (2E,6E)-farnesyl diphosphate = 4-farnesyl-3,5-dihydroxy-6-methylphthalide + diphosphate. The protein operates within secondary metabolite biosynthesis; terpenoid biosynthesis. Polyprenyl transferase; part of the gene cluster that mediates the biosynthesis of mycophenolic acid (MPA), the first isolated antibiotic natural product in the world obtained from a culture of Penicillium brevicompactum in 1893. MpaA' is a Golgi apparatus-associated enzyme that catalyzes the prenylation of 5,7-dihydroxy-4,6-dimethylphthalide (DHMP) to yield farnesyl-DHMP (FDHMP). The first step of the pathway is the synthesis of 5-methylorsellinic acid (5MOA) by the cytosolic polyketide synthase mpaC. 5MOA is then converted to the phthalide compound 5,7-dihydroxy-4,6-dimethylphthalide (DHMP) by the endoplasmic reticulum-bound cytochrome P450 monooxygenase mpaDE. MpaDE first catalyzes hydroxylation of 5-MOA to 4,6-dihydroxy-2-(hydroxymethyl)-3-methylbenzoic acid (DHMB). MpaDE then acts as a lactone synthase that catalyzes the ring closure to convert DHMB into DHMP. The next step is the prenylation of DHMP by the Golgi apparatus-associated prenyltransferase mpaA to yield farnesyl-DHMP (FDHMP). The ER-bound oxygenase mpaB then mediates the oxidative cleavage the C19-C20 double bond in FDHMP to yield FDHMP-3C via a mycophenolic aldehyde intermediate. The O-methyltransferase mpaG catalyzes the methylation of FDHMP-3C to yield MFDHMP-3C. After the cytosolic methylation of FDHMP-3C, MFDHMP-3C enters into peroxisomes probably via free diffusion due to its low molecular weight. Upon a peroxisomal CoA ligation reaction, catalyzed by a beta-oxidation component enzyme acyl-CoA ligase ACL891, MFDHMP-3C-CoA would then be restricted to peroxisomes for the following beta-oxidation pathway steps. The peroxisomal beta-oxidation machinery than converts MFDHMP-3C-CoA into MPA_CoA, via a beta-oxidation chain-shortening process. Finally mpaH acts as a peroxisomal acyl-CoA hydrolase with high substrate specificity toward MPA-CoA to release the final product MPA. This is Polyprenyl transferase mpaA' from Penicillium brevicompactum.